A 426-amino-acid polypeptide reads, in one-letter code: Lipoyl synthase, mitochondrial (426 aa).

The N-terminal 29 residues, 1–29 (MASPAPLQRLQAPLRRSLARAAVLSSRTY), are a transit peptide targeting the mitochondrion. Positions 27 to 42 (RTYATIPSPSDPGLTQ) are enriched in polar residues. The tract at residues 27-61 (RTYATIPSPSDPGLTQSSPSPAASTTPAKKAPRPS) is disordered. Residues 43–55 (SSPSPAASTTPAK) show a composition bias toward low complexity. Positions 140, 145, 151, 171, 175, 178, and 388 each coordinate [4Fe-4S] cluster. Positions 154–377 (GNDKSAATAT…KQRALDMGFL (224 aa)) constitute a Radical SAM core domain.

It belongs to the radical SAM superfamily. Lipoyl synthase family. The cofactor is [4Fe-4S] cluster.

The protein resides in the mitochondrion. The catalysed reaction is [[Fe-S] cluster scaffold protein carrying a second [4Fe-4S](2+) cluster] + N(6)-octanoyl-L-lysyl-[protein] + 2 oxidized [2Fe-2S]-[ferredoxin] + 2 S-adenosyl-L-methionine + 4 H(+) = [[Fe-S] cluster scaffold protein] + N(6)-[(R)-dihydrolipoyl]-L-lysyl-[protein] + 4 Fe(3+) + 2 hydrogen sulfide + 2 5'-deoxyadenosine + 2 L-methionine + 2 reduced [2Fe-2S]-[ferredoxin]. It functions in the pathway protein modification; protein lipoylation via endogenous pathway; protein N(6)-(lipoyl)lysine from octanoyl-[acyl-carrier-protein]: step 2/2. Functionally, catalyzes the radical-mediated insertion of two sulfur atoms into the C-6 and C-8 positions of the octanoyl moiety bound to the lipoyl domains of lipoate-dependent enzymes, thereby converting the octanoylated domains into lipoylated derivatives. In Podospora anserina (strain S / ATCC MYA-4624 / DSM 980 / FGSC 10383) (Pleurage anserina), this protein is Lipoyl synthase, mitochondrial.